A 270-amino-acid polypeptide reads, in one-letter code: Glutamate racemase (270 aa).

Substrate contacts are provided by residues 7 to 8 (DS) and 39 to 40 (YG). The Proton donor/acceptor role is filled by C70. 71-72 (NT) is a binding site for substrate. C194 serves as the catalytic Proton donor/acceptor. Residue 195 to 196 (TH) coordinates substrate.

Belongs to the aspartate/glutamate racemases family.

It carries out the reaction L-glutamate = D-glutamate. The protein operates within cell wall biogenesis; peptidoglycan biosynthesis. In terms of biological role, provides the (R)-glutamate required for cell wall biosynthesis. This chain is Glutamate racemase, found in Paracoccus denitrificans (strain Pd 1222).